A 585-amino-acid polypeptide reads, in one-letter code: A-type ATP synthase subunit A (585 aa).

Position 231–238 (Gly231–Thr238) interacts with ATP.

This sequence belongs to the ATPase alpha/beta chains family. As to quaternary structure, has multiple subunits with at least A(3), B(3), C, D, E, F, H, I and proteolipid K(x).

The protein resides in the cell membrane. It carries out the reaction ATP + H2O + 4 H(+)(in) = ADP + phosphate + 5 H(+)(out). Functionally, component of the A-type ATP synthase that produces ATP from ADP in the presence of a proton gradient across the membrane. The A chain is the catalytic subunit. In Thermococcus onnurineus (strain NA1), this protein is A-type ATP synthase subunit A.